A 482-amino-acid chain; its full sequence is Aspartyl/glutamyl-tRNA(Asn/Gln) amidotransferase subunit B (482 aa).

It belongs to the GatB/GatE family. GatB subfamily. Heterotrimer of A, B and C subunits.

It carries out the reaction L-glutamyl-tRNA(Gln) + L-glutamine + ATP + H2O = L-glutaminyl-tRNA(Gln) + L-glutamate + ADP + phosphate + H(+). The catalysed reaction is L-aspartyl-tRNA(Asn) + L-glutamine + ATP + H2O = L-asparaginyl-tRNA(Asn) + L-glutamate + ADP + phosphate + 2 H(+). Allows the formation of correctly charged Asn-tRNA(Asn) or Gln-tRNA(Gln) through the transamidation of misacylated Asp-tRNA(Asn) or Glu-tRNA(Gln) in organisms which lack either or both of asparaginyl-tRNA or glutaminyl-tRNA synthetases. The reaction takes place in the presence of glutamine and ATP through an activated phospho-Asp-tRNA(Asn) or phospho-Glu-tRNA(Gln). The protein is Aspartyl/glutamyl-tRNA(Asn/Gln) amidotransferase subunit B of Thermotoga sp. (strain RQ2).